We begin with the raw amino-acid sequence, 1449 residues long: Disease resistance protein RPP5 (1449 aa).

In terms of domain architecture, TIR spans 10–178 (RRYDVFPSFS…KISNDVSNKL (169 aa)). Glutamate 85 is an active-site residue. The NB-ARC domain occupies 192–446 (EAHIEAIKSV…IACLFNGFEV (255 aa)). LRR repeat units lie at residues 549-573 (MRNL…VYLP), 574-595 (LKLR…TFKA), 597-618 (YLVN…TLPL), 619-642 (GSLK…SNAR), 644-665 (LEEL…IQNA), 687-710 (MCNL…VYFP), 712-732 (KLRL…NFKV), 733-755 (EYLV…TQPL), 756-779 (GRLK…SLAI), 802-825 (AIKL…DLNL), 826-849 (ESLE…KMGC), 915-939 (LGSL…SKAT), 941-962 (LKHL…IGNL), 963-985 (QKLV…DVNL), 986-1011 (SSLE…SIKW), 1028-1052 (ATKL…IGNL), 1053-1077 (QNLR…NLSS), 1096-1119 (STNI…IEDF), and 1120-1143 (TRLR…IFRL).

Interacts with RSH1.

It catalyses the reaction NAD(+) + H2O = ADP-D-ribose + nicotinamide + H(+). TIR-NB-LRR receptor-like protein that confers resistance to the pathogen Hyaloperonospora arabidopsis isolate Noco2 (downy mildew disease). Confers resistance to H.arabidopsis isolates Emoy2, Emwa1 and Noco2. In Arabidopsis thaliana (Mouse-ear cress), this protein is Disease resistance protein RPP5.